The chain runs to 485 residues: MNEYPKKRKRKTLHPSRYSDSSGISRIADGFNGIFSDHCYSVCSMRQPDLKYFDNKDDDSDTETSNDLPKFADGIKARNRNQNYLVPSPVLRILDHTAFSTEKSADIVICDEECDSPESVNQQTQEESPIEVHTAEDVPIAVEVHAISEDYDIETENNSSESLQDQTDEEPPAKLCKILDKSQALNVTAQQKWPLLRANSSGLYKCELCEFNSKYFSDLKQHMILKHKRTDSNVCRVCKESFSTNMLLIEHAKLHEEDPYICKYCDYKTVIFENLSQHIADTHFSDHLYWCEQCDVQFSSSSELYLHFQEHSCDEQYLCQFCEHETNDPEDLHSHVVNEHACKLIELSDKYNNGEHGQYSLLSKITFDKCKNFFVCQVCGFRSRLHTNVNRHVAIEHTKIFPHVCDDCGKGFSSMLEYCKHLNSHLSEGIYLCQYCEYSTGQIEDLKIHLDFKHSADLPHKCSDCLMRFGNERELISHLPVHETT.

The segment covering Met1–His14 has biased composition (basic residues). The tract at residues Met1–Asp20 is disordered. Ser60 carries the phosphoserine modification. A Glycyl lysine isopeptide (Lys-Gly) (interchain with G-Cter in SUMO2) cross-link involves residue Lys76. Phosphoserine is present on Ser88. Glycyl lysine isopeptide (Lys-Gly) (interchain with G-Cter in SUMO2) cross-links involve residues Lys177, Lys181, and Lys226. C2H2-type zinc fingers lie at residues Tyr204–His227, Asn233–His255, Tyr260–His283, Tyr289–His311, Phe374–His397, His403–His425, Tyr431–His454, and His460–His482. Residues Lys371–Ser455 are interaction with CTNNA2.

Belongs to the krueppel C2H2-type zinc-finger protein family. Interacts with CTNNA2.

It is found in the nucleus. Its function is as follows. Binds DNA and may function as a transcriptional repressor. This chain is Zinc finger protein 639 (ZNF639), found in Homo sapiens (Human).